Consider the following 766-residue polypeptide: BMP/retinoic acid-inducible neural-specific protein 3 (766 aa).

The N-terminal stretch at 1–33 is a signal peptide; the sequence is MIWRRRAGAELSSLMALWEWIVLSLHCWVLAVA. An MACPF domain is found at 74-264; that stretch reads RYKIYREFGR…FVQAALSYIA (191 aa). 6 N-linked (GlcNAc...) asparagine glycosylation sites follow: Asn-168, Asn-337, Asn-456, Asn-562, Asn-609, and Asn-641.

Belongs to the BRINP family. As to expression, expressed in the brain. Weakly expressed in embryonic stem (ES) cells. Expressed in ES-derived neural stem cells (NSCs) and neuronal cells.

It localises to the secreted. Its subcellular location is the mitochondrion. Its function is as follows. Inhibits neuronal cell proliferation by negative regulation of the cell cycle transition. Promotes pituitary gonadotrope cell proliferation, migration and invasion, when overexpressed. May play a role in cell pituitary tumor development. This chain is BMP/retinoic acid-inducible neural-specific protein 3 (Brinp3), found in Mus musculus (Mouse).